Reading from the N-terminus, the 358-residue chain is Peptide chain release factor 1 (358 aa).

N5-methylglutamine is present on Gln233.

It belongs to the prokaryotic/mitochondrial release factor family. In terms of processing, methylated by PrmC. Methylation increases the termination efficiency of RF1.

The protein resides in the cytoplasm. Functionally, peptide chain release factor 1 directs the termination of translation in response to the peptide chain termination codons UAG and UAA. The chain is Peptide chain release factor 1 from Geobacillus sp. (strain WCH70).